Here is a 157-residue protein sequence, read N- to C-terminus: MPRRGTIERRIPPPDPRYNSVLVQQFINKVMQRGKKSIAEKIVYQAFDLAAQRLKKPALEIFETAVRNAGPVIEVKPRRVGGATYQVPVEVKSDRRQSLAMRWLLMSARARSGKPMYERLAAELIDAYNNTGATIKRKEDVQRMAEANRAFSHYGRF.

This sequence belongs to the universal ribosomal protein uS7 family. In terms of assembly, part of the 30S ribosomal subunit. Contacts proteins S9 and S11.

One of the primary rRNA binding proteins, it binds directly to 16S rRNA where it nucleates assembly of the head domain of the 30S subunit. Is located at the subunit interface close to the decoding center, probably blocks exit of the E-site tRNA. The polypeptide is Small ribosomal subunit protein uS7 (Roseiflexus sp. (strain RS-1)).